The following is a 249-amino-acid chain: Type III pantothenate kinase (249 aa).

ATP is bound at residue 6–13; the sequence is DCGNSFIK. Substrate-binding positions include tyrosine 93 and 100–103; that span reads GLDR. Aspartate 102 acts as the Proton acceptor in catalysis. Aspartate 122 is a binding site for K(+). Threonine 125 contacts ATP. A substrate-binding site is contributed by threonine 181.

Belongs to the type III pantothenate kinase family. In terms of assembly, homodimer. It depends on NH4(+) as a cofactor. K(+) is required as a cofactor.

The protein resides in the cytoplasm. It carries out the reaction (R)-pantothenate + ATP = (R)-4'-phosphopantothenate + ADP + H(+). It participates in cofactor biosynthesis; coenzyme A biosynthesis; CoA from (R)-pantothenate: step 1/5. In terms of biological role, catalyzes the phosphorylation of pantothenate (Pan), the first step in CoA biosynthesis. In Pseudomonas fluorescens (strain Pf0-1), this protein is Type III pantothenate kinase.